The chain runs to 411 residues: Anaerobic sulfatase-maturating enzyme homolog AslB (411 aa).

In terms of domain architecture, Radical SAM core spans 3-250 (QQVPTRAFHV…LVAIFDHWIK (248 aa)). Residues Cys21 and Cys25 each coordinate [4Fe-4S] cluster. S-adenosyl-L-methionine is bound at residue Tyr27. Cys28 is a [4Fe-4S] cluster binding site. Residues Gly74, Ser129, and Arg141 each coordinate S-adenosyl-L-methionine. Residues Cys276, Cys282, and Cys297 each contribute to the [4Fe-4S] cluster site. The active-site Proton acceptor is Asp298. 5 residues coordinate [4Fe-4S] cluster: Cys339, Cys342, Cys348, Cys352, and Cys371.

Belongs to the radical SAM superfamily. Anaerobic sulfatase-maturating enzyme family. The cofactor is [4Fe-4S] cluster.

This Escherichia coli (strain K12) protein is Anaerobic sulfatase-maturating enzyme homolog AslB (aslB).